The sequence spans 441 residues: Glutamate-1-semialdehyde 2,1-aminomutase (441 aa).

Lys-276 carries the post-translational modification N6-(pyridoxal phosphate)lysine.

Belongs to the class-III pyridoxal-phosphate-dependent aminotransferase family. HemL subfamily. In terms of assembly, homodimer. It depends on pyridoxal 5'-phosphate as a cofactor.

It is found in the cytoplasm. It catalyses the reaction (S)-4-amino-5-oxopentanoate = 5-aminolevulinate. It functions in the pathway porphyrin-containing compound metabolism; protoporphyrin-IX biosynthesis; 5-aminolevulinate from L-glutamyl-tRNA(Glu): step 2/2. The polypeptide is Glutamate-1-semialdehyde 2,1-aminomutase (Rhodococcus jostii (strain RHA1)).